The following is a 93-amino-acid chain: uncharacterized protein (93 aa).

A run of 3 helical transmembrane segments spans residues 9-29 (ITVI…PQLI), 40-60 (ISLA…IYGI), and 66-86 (PIIV…YLKI).

The protein resides in the cell membrane. This is an uncharacterized protein from Methanocaldococcus jannaschii (strain ATCC 43067 / DSM 2661 / JAL-1 / JCM 10045 / NBRC 100440) (Methanococcus jannaschii).